A 378-amino-acid chain; its full sequence is Anhydro-N-acetylmuramic acid kinase (378 aa).

9-16 (GTSVDGID) contacts ATP.

Belongs to the anhydro-N-acetylmuramic acid kinase family.

The catalysed reaction is 1,6-anhydro-N-acetyl-beta-muramate + ATP + H2O = N-acetyl-D-muramate 6-phosphate + ADP + H(+). Its pathway is amino-sugar metabolism; 1,6-anhydro-N-acetylmuramate degradation. It participates in cell wall biogenesis; peptidoglycan recycling. Its function is as follows. Catalyzes the specific phosphorylation of 1,6-anhydro-N-acetylmuramic acid (anhMurNAc) with the simultaneous cleavage of the 1,6-anhydro ring, generating MurNAc-6-P. Is required for the utilization of anhMurNAc either imported from the medium or derived from its own cell wall murein, and thus plays a role in cell wall recycling. The chain is Anhydro-N-acetylmuramic acid kinase from Microcystis aeruginosa (strain NIES-843 / IAM M-2473).